Consider the following 959-residue polypeptide: rDNA transcriptional regulator pol5 (959 aa).

A phosphoserine mark is found at Ser742 and Ser743. Residues 936–959 (HQQTSTAASSPQKTGHHENEKTNH) form a disordered region. The span at 937–948 (QQTSTAASSPQK) shows a compositional bias: polar residues. Residues 950 to 959 (GHHENEKTNH) show a composition bias toward basic and acidic residues.

It belongs to the MYBBP1A family. Interacts with cdc10.

Its subcellular location is the nucleus. Functionally, plays an important role in the regulation of rRNA transcription. Binds to rDNA promoter fragments. This is rDNA transcriptional regulator pol5 (pol5) from Schizosaccharomyces pombe (strain 972 / ATCC 24843) (Fission yeast).